The primary structure comprises 483 residues: Rhamnulokinase (483 aa).

11 to 15 (ASSGR) lines the ATP pocket. Residues Gly79 and 234 to 236 (HDT) contribute to the substrate site. Catalysis depends on Asp235, which acts as the Proton acceptor. An ATP-binding site is contributed by Thr257. Asn294 provides a ligand contact to substrate. Residue Gln302 participates in ATP binding. An intrachain disulfide couples Cys352 to Cys369. Gly401 provides a ligand contact to ATP.

This sequence belongs to the rhamnulokinase family. Requires Mg(2+) as cofactor.

The enzyme catalyses L-rhamnulose + ATP = L-rhamnulose 1-phosphate + ADP + H(+). The protein operates within carbohydrate degradation; L-rhamnose degradation; glycerone phosphate from L-rhamnose: step 2/3. Its function is as follows. Involved in the catabolism of L-rhamnose (6-deoxy-L-mannose). Catalyzes the transfer of the gamma-phosphate group from ATP to the 1-hydroxyl group of L-rhamnulose to yield L-rhamnulose 1-phosphate. The protein is Rhamnulokinase of Listeria innocua serovar 6a (strain ATCC BAA-680 / CLIP 11262).